The sequence spans 342 residues: Phosphate acyltransferase (342 aa).

Belongs to the PlsX family. Homodimer. Probably interacts with PlsY.

The protein localises to the cytoplasm. It carries out the reaction a fatty acyl-[ACP] + phosphate = an acyl phosphate + holo-[ACP]. Its pathway is lipid metabolism; phospholipid metabolism. Functionally, catalyzes the reversible formation of acyl-phosphate (acyl-PO(4)) from acyl-[acyl-carrier-protein] (acyl-ACP). This enzyme utilizes acyl-ACP as fatty acyl donor, but not acyl-CoA. This Shewanella putrefaciens (strain CN-32 / ATCC BAA-453) protein is Phosphate acyltransferase.